The sequence spans 250 residues: DNA repair protein RecO (250 aa).

This sequence belongs to the RecO family.

Functionally, involved in DNA repair and RecF pathway recombination. In Granulibacter bethesdensis (strain ATCC BAA-1260 / CGDNIH1), this protein is DNA repair protein RecO.